The primary structure comprises 221 residues: Thymidylate kinase (221 aa).

11-18 (GPDGAGKT) contacts ATP.

Belongs to the thymidylate kinase family.

It carries out the reaction dTMP + ATP = dTDP + ADP. Functionally, phosphorylation of dTMP to form dTDP in both de novo and salvage pathways of dTTP synthesis. This Lactiplantibacillus plantarum (strain ATCC BAA-793 / NCIMB 8826 / WCFS1) (Lactobacillus plantarum) protein is Thymidylate kinase.